Here is a 171-residue protein sequence, read N- to C-terminus: Large ribosomal subunit protein uL10 (171 aa).

It belongs to the universal ribosomal protein uL10 family. In terms of assembly, part of the ribosomal stalk of the 50S ribosomal subunit. The N-terminus interacts with L11 and the large rRNA to form the base of the stalk. The C-terminus forms an elongated spine to which L12 dimers bind in a sequential fashion forming a multimeric L10(L12)X complex.

Functionally, forms part of the ribosomal stalk, playing a central role in the interaction of the ribosome with GTP-bound translation factors. This chain is Large ribosomal subunit protein uL10, found in Corynebacterium diphtheriae (strain ATCC 700971 / NCTC 13129 / Biotype gravis).